Reading from the N-terminus, the 188-residue chain is V-type proton ATPase subunit E (188 aa).

Belongs to the V-ATPase E subunit family.

Functionally, produces ATP from ADP in the presence of a proton gradient across the membrane. The protein is V-type proton ATPase subunit E of Dictyoglomus thermophilum (strain ATCC 35947 / DSM 3960 / H-6-12).